We begin with the raw amino-acid sequence, 466 residues long: ATP synthase subunit beta (466 aa).

156 to 163 contacts ATP; it reads GGAGVGKT.

It belongs to the ATPase alpha/beta chains family. As to quaternary structure, F-type ATPases have 2 components, CF(1) - the catalytic core - and CF(0) - the membrane proton channel. CF(1) has five subunits: alpha(3), beta(3), gamma(1), delta(1), epsilon(1). CF(0) has three main subunits: a(1), b(2) and c(9-12). The alpha and beta chains form an alternating ring which encloses part of the gamma chain. CF(1) is attached to CF(0) by a central stalk formed by the gamma and epsilon chains, while a peripheral stalk is formed by the delta and b chains.

It localises to the cell membrane. The catalysed reaction is ATP + H2O + 4 H(+)(in) = ADP + phosphate + 5 H(+)(out). Its function is as follows. Produces ATP from ADP in the presence of a proton gradient across the membrane. The catalytic sites are hosted primarily by the beta subunits. This chain is ATP synthase subunit beta, found in Polynucleobacter asymbioticus (strain DSM 18221 / CIP 109841 / QLW-P1DMWA-1) (Polynucleobacter necessarius subsp. asymbioticus).